A 1335-amino-acid chain; its full sequence is Bifunctional autolysin (1335 aa).

A signal peptide spans methionine 1–alanine 29. 3 disordered regions span residues glutamine 51 to threonine 88, asparagine 100 to glutamate 262, and tryptophan 514 to leucine 535. Polar residues-rich tracts occupy residues glutamate 58–threonine 88, asparagine 100–asparagine 127, threonine 143–alanine 155, threonine 176–glycine 223, and serine 244–tyrosine 258. The tract at residues valine 303–lysine 863 is N-acetylmuramoyl-L-alanine amidase. Over residues glycine 515–threonine 531 the composition is skewed to low complexity. 7 consecutive GW domains span residues asparagine 533–alanine 610, alanine 612–lysine 686, threonine 700–alanine 774, serine 776–lysine 850, serine 868–isoleucine 943, lysine 945–threonine 1020, and glutamine 1023–isoleucine 1096. The tract at residues glutamine 864 to lysine 1335 is endo-beta-N-acetylglucosaminidase.

In the N-terminal section; belongs to the N-acetylmuramoyl-L-alanine amidase 2 family. The protein in the C-terminal section; belongs to the glycosyl hydrolase 73 family. Oligomer; forms a ring structure at the cell surface which is important for efficient partitioning of daughter cells after cell division. In terms of processing, undergoes proteolytic processing to generate the two extracellular lytic enzymes, probably at the septal region on the cell surface.

It is found in the secreted. It catalyses the reaction Hydrolyzes the link between N-acetylmuramoyl residues and L-amino acid residues in certain cell-wall glycopeptides.. The catalysed reaction is an N(4)-(oligosaccharide-(1-&gt;3)-[oligosaccharide-(1-&gt;6)]-beta-D-Man-(1-&gt;4)-beta-D-GlcNAc-(1-&gt;4)-alpha-D-GlcNAc)-L-asparaginyl-[protein] + H2O = an oligosaccharide-(1-&gt;3)-[oligosaccharide-(1-&gt;6)]-beta-D-Man-(1-&gt;4)-D-GlcNAc + N(4)-(N-acetyl-beta-D-glucosaminyl)-L-asparaginyl-[protein]. In terms of biological role, endohydrolysis of the di-N-acetylchitobiosyl unit in high-mannose glycopeptides and glycoproteins containing the -[(Man)5(GlcNAc)2]-Asn structure. One N-acetyl-D-glucosamine residue remains attached to the protein; the rest of the oligosaccharide is released intact. Cleaves the peptidoglycan connecting the daughter cells at the end of the cell division cycle, resulting in the separation of the two newly divided cells. Acts as an autolysin in penicillin-induced lysis. As a bacterial surface-associated protein, mediates attachment to polystyrene surfaces, contributing to biofilm formation. Also has vitronectin-binding activity. This is Bifunctional autolysin (atl) from Staphylococcus epidermidis.